The sequence spans 170 residues: Nicotinamide-nucleotide adenylyltransferase (170 aa).

It belongs to the archaeal NMN adenylyltransferase family.

It localises to the cytoplasm. It carries out the reaction beta-nicotinamide D-ribonucleotide + ATP + H(+) = diphosphate + NAD(+). Its pathway is cofactor biosynthesis; NAD(+) biosynthesis; NAD(+) from nicotinamide D-ribonucleotide: step 1/1. This Methanothrix thermoacetophila (strain DSM 6194 / JCM 14653 / NBRC 101360 / PT) (Methanosaeta thermophila) protein is Nicotinamide-nucleotide adenylyltransferase.